Reading from the N-terminus, the 359-residue chain is Molybdenum import ATP-binding protein ModC (359 aa).

An ABC transporter domain is found at 1-233 (MSGLTVSIRG…IDAESEGGGV (233 aa)). 32-39 (GHSGAGKT) serves as a coordination point for ATP. Residues 289–355 (AISIRNLLPV…VKAVSVDRAA (67 aa)) form the Mop domain.

This sequence belongs to the ABC transporter superfamily. Molybdate importer (TC 3.A.1.8) family. As to quaternary structure, the complex is composed of two ATP-binding proteins (ModC), two transmembrane proteins (ModB) and a solute-binding protein (ModA).

The protein resides in the cell inner membrane. It carries out the reaction molybdate(out) + ATP + H2O = molybdate(in) + ADP + phosphate + H(+). Functionally, part of the ABC transporter complex ModABC involved in molybdenum import. Responsible for energy coupling to the transport system. This Brucella abortus (strain 2308) protein is Molybdenum import ATP-binding protein ModC.